Reading from the N-terminus, the 480-residue chain is RAC-alpha serine/threonine-protein kinase (480 aa).

The PH domain occupies 5–108; it reads AIVKEGWLHK…WTTAIQTVAD (104 aa). Residues K14 and K20 each carry the N6-acetyllysine modification. Residue 14-19 participates in 1D-myo-inositol 1,3,4,5-tetrakisphosphate binding; that stretch reads KRGEYI. Residues 23–25 and N53 each bind 1D-myo-inositol 1,3,4,5-tetrakisphosphate; that span reads RPR. C60 and C77 are oxidised to a cystine. A 1D-myo-inositol 1,3,4,5-tetrakisphosphate-binding site is contributed by R86. Position 124 is a phosphoserine (S124). S129 carries the phosphoserine; alternate modification. S129 carries O-linked (GlcNAc) serine; alternate glycosylation. Residues 150–408 enclose the Protein kinase domain; that stretch reads FEYLKLLGKG…AKEIMQHRFF (259 aa). 156–164 lines the ATP pocket; the sequence is LGKGTFGKV. Y176 carries the post-translational modification Phosphotyrosine; by TNK2. K179 contributes to the ATP binding site. Catalysis depends on D274, which acts as the Proton acceptor. Residue K284 forms a Glycyl lysine isopeptide (Lys-Gly) (interchain with G-Cter in ubiquitin) linkage. C296 and C310 are joined by a disulfide. O-linked (GlcNAc) threonine glycosylation is present at T305. T308 carries the phosphothreonine; by PDPK1 modification. O-linked (GlcNAc) threonine glycosylation is present at T312. In terms of domain architecture, AGC-kinase C-terminal spans 409–480; it reads ASIVWQDVYE…QFSYSASATA (72 aa). The residue at position 448 (T448) is a Phosphothreonine. Phosphothreonine; by MTOR is present on T450. The segment at 450 to 480 is disordered; sequence TPPDQDDSMEGVDSERRPHFPQFSYSASATA. Residue S473 is glycosylated (O-linked (GlcNAc) serine; alternate). S473 is subject to Phosphoserine; by MTOR; alternate. Y474 bears the Phosphotyrosine mark. S477 carries the phosphoserine modification. T479 carries the post-translational modification Phosphothreonine.

Belongs to the protein kinase superfamily. AGC Ser/Thr protein kinase family. RAC subfamily. As to quaternary structure, interacts (via the C-terminus) with CCDC88A (via its C-terminus) and THEM4 (via its C-terminus). Interacts with AKTIP. Interacts (via PH domain) with MTCP1, TCL1A and TCL1B. Interacts with TRAF6. Interacts with GRB10; the interaction leads to GRB10 phosphorylation thus promoting YWHAE binding. Interacts with RARA; the interaction phosphorylates RARA and represses its transactivation activity. Interacts with MAP3K5 and TNK2. Interacts with BAD, CLK2, PPP2R5B, STK3 and STK4. Interacts (via PH domain) with SIRT1. Interacts with SRPK2 in a phosphorylation-dependent manner. Interacts with RAF1. Interacts with PKN2 (via C-terminal domain); the interaction occurs with the C-terminus cleavage products of PKN2 in apoptotic cells. Interacts with TRIM13; the interaction ubiquitinates AKT1 leading to its proteasomal degradation. Interacts with and phosphorylated by PDPK1. Interacts with BTBD10. Interacts with KCTD20. Interacts with PA2G4. Interacts with PA2G4. Interacts with KIF14; the interaction is detected in the plasma membrane upon INS stimulation and promotes AKT1 phosphorylation. Interacts with FAM83B; activates the PI3K/AKT signaling cascade. Interacts with WDFY2 (via WD repeats 1-3). Forms a complex with WDFY2 and FOXO1. Interacts with FAM168A. Interacts with SYAP1 (via phosphorylated form and BSD domain); this interaction is enhanced in a mTORC2-mediated manner in response to epidermal growth factor (EGF) stimulation and activates AKT1. Interacts with PKHM3. Interacts with FKBP5/FKBP51; promoting interaction between Akt/AKT1 and PHLPP1, thereby enhancing dephosphorylation and subsequent activation of Akt/AKT1. Interacts with TMEM175; leading to formation of the lysoK(GF) complex. In terms of processing, O-GlcNAcylation at Thr-305 and Thr-312 inhibits activating phosphorylation at Thr-308 via disrupting the interaction between AKT1 and PDPK1. O-GlcNAcylation at Ser-473 also probably interferes with phosphorylation at this site. Post-translationally, phosphorylation on Thr-308, Ser-473 and Tyr-474 is required for full activity. Phosphorylation of the activation loop at Thr-308 by PDPK1/PDK1 is a prerequisite for full activation. Phosphorylation by mTORC2 in response to growth factors plays a key role in AKT1 activation: mTORC2 phosphorylates different sites depending on the context, such as Thr-450, Ser-473, Ser-477 or Thr-479, thereby facilitating subsequent phosphorylation of the activation loop by PDPK1/PDK1. Phosphorylation at Ser-473 by mTORC2 promotes ubiquitination and degradation by the proteasome. Also phosphorylated at Ser-477 and Thr-479 by CDK2, facilitating subsequent phosphorylation of the activation loop by PDPK1/PDK1. Activated TNK2 phosphorylates it on Tyr-176 resulting in its binding to the anionic plasma membrane phospholipid PA. This phosphorylated form localizes to the cell membrane, where it is targeted by PDPK1 and PDPK2 for further phosphorylations on Thr-308 and Ser-473 leading to its activation. Phosphorylated at Thr-308 and Ser-473 by IKBKE and TBK1. Ser-473 phosphorylation is enhanced by interaction with AGAP2 isoform 2 (PIKE-A). Ser-473 phosphorylation is enhanced by signaling through activated FLT3. Ser-473 is dephosphorylated by PHLPP. Dephosphorylated at Thr-308 and Ser-473 by PP2A phosphatase. The phosphorylated form of PPP2R5B is required for bridging AKT1 with PP2A phosphatase. Ser-473 is dephosphorylated by CPPED1, leading to termination of signaling. AIM2 acts as an inhibitor of AKT1 by inhibiting phosphorylation Ser-473: AIM2 acts both by inhibiting the activity of PRKDC/DNA-PK kinase and promoting dephosphorylation by PP2A phosphatase. Ubiquitinated; undergoes both 'Lys-48'- and 'Lys-63'-linked polyubiquitination. TRAF6-induced 'Lys-63'-linked AKT1 ubiquitination is critical for phosphorylation and activation. When ubiquitinated, it translocates to the plasma membrane, where it becomes phosphorylated. When fully phosphorylated and translocated into the nucleus, undergoes 'Lys-48'-polyubiquitination catalyzed by TTC3, leading to its degradation by the proteasome. Ubiquitinated via 'Lys-48'-linked polyubiquitination by ZNRF1, leading to its degradation by the proteasome. Also ubiquitinated by TRIM13 leading to its proteasomal degradation. Phosphorylated, undergoes 'Lys-48'-linked polyubiquitination preferentially at Lys-284 catalyzed by MUL1, leading to its proteasomal degradation. In terms of processing, acetylated on Lys-14 and Lys-20 by the histone acetyltransferases EP300 and KAT2B. Acetylation results in reduced phosphorylation and inhibition of activity. Deacetylated at Lys-14 and Lys-20 by SIRT1. SIRT1-mediated deacetylation relieves the inhibition. Post-translationally, cleavage by caspase-3/CASP3. Cleaved at the caspase-3 consensus site Asp-462 during apoptosis, resulting in down-regulation of the AKT signaling pathway and decreased cell survival.

It is found in the cytoplasm. Its subcellular location is the nucleus. The protein localises to the cell membrane. The protein resides in the mitochondrion intermembrane space. It carries out the reaction L-seryl-[protein] + ATP = O-phospho-L-seryl-[protein] + ADP + H(+). The catalysed reaction is L-threonyl-[protein] + ATP = O-phospho-L-threonyl-[protein] + ADP + H(+). Functionally, AKT1 is one of 3 closely related serine/threonine-protein kinases (AKT1, AKT2 and AKT3) called the AKT kinase, and which regulate many processes including metabolism, proliferation, cell survival, growth and angiogenesis. This is mediated through serine and/or threonine phosphorylation of a range of downstream substrates. Over 100 substrate candidates have been reported so far, but for most of them, no isoform specificity has been reported. AKT is responsible of the regulation of glucose uptake by mediating insulin-induced translocation of the SLC2A4/GLUT4 glucose transporter to the cell surface. Phosphorylation of PTPN1 at 'Ser-50' negatively modulates its phosphatase activity preventing dephosphorylation of the insulin receptor and the attenuation of insulin signaling. Phosphorylation of TBC1D4 triggers the binding of this effector to inhibitory 14-3-3 proteins, which is required for insulin-stimulated glucose transport. AKT also regulates the storage of glucose in the form of glycogen by phosphorylating GSK3A at 'Ser-21' and GSK3B at 'Ser-9', resulting in inhibition of its kinase activity. Phosphorylation of GSK3 isoforms by AKT is also thought to be one mechanism by which cell proliferation is driven. AKT also regulates cell survival via the phosphorylation of MAP3K5 (apoptosis signal-related kinase). Phosphorylation of 'Ser-83' decreases MAP3K5 kinase activity stimulated by oxidative stress and thereby prevents apoptosis. AKT mediates insulin-stimulated protein synthesis by phosphorylating TSC2 at 'Ser-939' and 'Thr-1462', thereby activating the mTORC1 signaling pathway, and leading to both phosphorylation of 4E-BP1 and in activation of RPS6KB1. Also regulates the mTORC1 signaling pathway by catalyzing phosphorylation of CASTOR1 and DEPDC5. AKT plays a role as key modulator of the AKT-mTOR signaling pathway controlling the tempo of the process of newborn neurons integration during adult neurogenesis, including correct neuron positioning, dendritic development and synapse formation. Part of a positive feedback loop of mTORC2 signaling by mediating phosphorylation of MAPKAP1/SIN1, promoting mTORC2 activation. AKT is involved in the phosphorylation of members of the FOXO factors (Forkhead family of transcription factors), leading to binding of 14-3-3 proteins and cytoplasmic localization. In particular, FOXO1 is phosphorylated at 'Thr-24', 'Ser-256' and 'Ser-319'. FOXO3 and FOXO4 are phosphorylated on equivalent sites. AKT has an important role in the regulation of NF-kappa-B-dependent gene transcription and positively regulates the activity of CREB1 (cyclic AMP (cAMP)-response element binding protein). The phosphorylation of CREB1 induces the binding of accessory proteins that are necessary for the transcription of pro-survival genes such as BCL2 and MCL1. AKT phosphorylates 'Ser-454' on ATP citrate lyase (ACLY), thereby potentially regulating ACLY activity and fatty acid synthesis. Activates the 3B isoform of cyclic nucleotide phosphodiesterase (PDE3B) via phosphorylation of 'Ser-273', resulting in reduced cyclic AMP levels and inhibition of lipolysis. Phosphorylates PIKFYVE on 'Ser-318', which results in increased PI(3)P-5 activity. The Rho GTPase-activating protein DLC1 is another substrate and its phosphorylation is implicated in the regulation cell proliferation and cell growth. Signals downstream of phosphatidylinositol 3-kinase (PI(3)K) to mediate the effects of various growth factors such as platelet-derived growth factor (PDGF), epidermal growth factor (EGF), insulin and insulin-like growth factor 1 (IGF1). AKT mediates the antiapoptotic effects of IGF1. Essential for the SPATA13-mediated regulation of cell migration and adhesion assembly and disassembly. May be involved in the regulation of the placental development. Phosphorylates STK4/MST1 at 'Thr-120' and 'Thr-387' leading to inhibition of its: kinase activity, nuclear translocation, autophosphorylation and ability to phosphorylate FOXO3. Phosphorylates STK3/MST2 at 'Thr-117' and 'Thr-384' leading to inhibition of its: cleavage, kinase activity, autophosphorylation at Thr-180, binding to RASSF1 and nuclear translocation. Phosphorylates SRPK2 and enhances its kinase activity towards SRSF2 and ACIN1 and promotes its nuclear translocation. Phosphorylates RAF1 at 'Ser-259' and negatively regulates its activity. Phosphorylation of BAD stimulates its pro-apoptotic activity. Phosphorylates KAT6A at 'Thr-369' and this phosphorylation inhibits the interaction of KAT6A with PML and negatively regulates its acetylation activity towards p53/TP53. Phosphorylates palladin (PALLD), modulating cytoskeletal organization and cell motility. Phosphorylates prohibitin (PHB), playing an important role in cell metabolism and proliferation. Phosphorylates CDKN1A, for which phosphorylation at 'Thr-145' induces its release from CDK2 and cytoplasmic relocalization. These recent findings indicate that the AKT1 isoform has a more specific role in cell motility and proliferation. Phosphorylates CLK2 thereby controlling cell survival to ionizing radiation. Phosphorylates PCK1 at 'Ser-90', reducing the binding affinity of PCK1 to oxaloacetate and changing PCK1 into an atypical protein kinase activity using GTP as donor. Also acts as an activator of TMEM175 potassium channel activity in response to growth factors: forms the lysoK(GF) complex together with TMEM175 and acts by promoting TMEM175 channel activation, independently of its protein kinase activity. Acts as a negative regulator of the cGAS-STING pathway by mediating phosphorylation of CGAS during mitosis, leading to its inhibition. Acts as a regulator of mitochondrial calcium uptake by mediating phosphorylation of MICU1 in the mitochondrial intermembrane space, impairing MICU1 maturation. Acts as an inhibitor of tRNA methylation by mediating phosphorylation of the N-terminus of METTL1, thereby inhibiting METTL1 methyltransferase activity. In response to LPAR1 receptor pathway activation, phosphorylates Rabin8/RAB3IP which alters its activity and phosphorylates WDR44 which induces WDR44 binding to Rab11, thereby switching Rab11 vesicular function from preciliary trafficking to endocytic recycling. This chain is RAC-alpha serine/threonine-protein kinase (AKT1), found in Bos taurus (Bovine).